Here is a 1362-residue protein sequence, read N- to C-terminus: MTSSSKSRKSKSSKASKAAKEAPVSASRPLSKTPPPFRNQVIDKRALKQLVAWSYKNHGTAVTSSMADNLKDLGFKYATQAAVSISVDDLKVPEAKKDLLGQAEEQITATEERYRLGEITEVERHTKVIDTWTETNERLVDAVKKNFDENAPLNSVWMMANSGARGNMSQVRQLVGMRGLMANPQGEIIDLPIRTNFREGLTVTEYVISSYGARKGLVDTALRTADSGYLTRRLVDVAQDVIVREDDCGTTRHIVVDAEDGKFGSRLVGRLTAAQVVNADGEVLAERDTEIDPPLSKSFEAAGVKAVSVRSPLTCEANRSVCRKCYGWALAHNELVDLGEAVGIIAAQSIGEPGTQLTMRTFHTGGVSTAETGVVRSKVAGTVEFGSKARVRPYRTPHGVNAQQAEVDFNLTIKPSGKGKAQKIEITNGSLLFVDNGAEIDADVTVAQIAAGAVKKSVEKATKDVICDLAGQVRYEEAIQPREVTDRQGNITLKAQRLGRMWVLSGDVYNLPPNAQPVVGSETQVTEGQVLAEASQRSEYGGEVRLRDSIGDSREVQIVTTAMTLKDFKLLEESTHSGEIWNLEAKDGTRYRLNTIPGSKIGSGEVIAELADDRFRTGTGGLVKFAPGLAIKKARSAKNGYEVNKGGTLLWIPQETHEINKDISLLMITDGQWIEAGTEVVKDIFSQTAGIVTVTQKNDILREIIVRSGEFHLCTDAKALERFEGDGQMVNPGEDIAKGLSVDTMKYVQTVETPEGKGLLLRPVEEYTIPNVAQLPELSHVKQANGPHLGIKATQRLAFKDNELIKSVEGVELLKTQLLLETFDTTPQMTVDVEKAPDKRAKTISRLRLVILESILVRRDTMSDSSHGSTHTELQVEDGVSVKAGDVVATTQILCKQAGLAQLPEATEADPVRRMIVERPEDTTTLSTSGKPVVSVGQRIVDGDALAEGETASCCGEIEAVSGNSVTLRLGRPYMVSPDSVLHVRDGNLVQRGDGLALLVFERQKTGDIVQGLPRIEELLEARRPRESTILCKKPGTVEIKQGEDDESLAVNVIESDDAIGEYPILLGRNIMVSDGQQVTAGELLTDGPINPHELLECYFEDLRSRKPLMEAAQEAIANLQHRLVTEVQNVYKSQGVSIDDKHIEVIVRQMTSKVRVEDAGDTTLLPGELIELRQVEDTNQAMAITGGAPAEFTPVLLGITKASLNTDSFISAASFQETTRVLTEAAIEGKSDWLRGLKENVIIGRLIPAGTGFSGFEEELQKEAGPHPDILSEDPAGYRRMQNLRPDYTVDMPPAASASAVLDDPSDADLEATRTRHNIDPSASNFAAFTRPDADNELKEEQVVDAEAVEGLQEEGLLSDE.

Over residues 1 to 14 the composition is skewed to basic residues; that stretch reads MTSSSKSRKSKSSK. A disordered region spans residues 1 to 39; it reads MTSSSKSRKSKSSKASKAAKEAPVSASRPLSKTPPPFRN. Low complexity predominate over residues 15–27; that stretch reads ASKAAKEAPVSAS. Zn(2+) contacts are provided by Cys248, Cys315, Cys322, and Cys325. The tract at residues 1316–1336 is disordered; sequence TRHNIDPSASNFAAFTRPDAD.

This sequence belongs to the RNA polymerase beta' chain family. RpoC2 subfamily. As to quaternary structure, in cyanobacteria the RNAP catalytic core is composed of 2 alpha, 1 beta, 1 beta', 1 gamma and 1 omega subunit. When a sigma factor is associated with the core the holoenzyme is formed, which can initiate transcription. It depends on Zn(2+) as a cofactor.

The enzyme catalyses RNA(n) + a ribonucleoside 5'-triphosphate = RNA(n+1) + diphosphate. DNA-dependent RNA polymerase catalyzes the transcription of DNA into RNA using the four ribonucleoside triphosphates as substrates. This Synechococcus sp. (strain CC9605) protein is DNA-directed RNA polymerase subunit beta'.